The primary structure comprises 381 residues: ATP synthase subunit a (381 aa).

The disordered stretch occupies residues 24-73; it reads PVAAPVEQHGQAPEAAPDAHGSPAGEPGAAVEAHAAAAEHGEAAGHEGGH. Positions 47–59 are enriched in low complexity; sequence AGEPGAAVEAHAA. A compositionally biased stretch (basic and acidic residues) spans 60 to 73; sequence AAEHGEAAGHEGGH. 6 helical membrane-spanning segments follow: residues 128–148, 190–210, 215–235, 255–275, 290–310, and 316–336; these read KHVV…LGAV, LVTA…PFSA, NLSV…YAAI, LAPL…TKPF, FVIL…VAFG, and LSIF…FTML. Residues 351 to 360 are compositionally biased toward basic and acidic residues; it reads DHGHAEEHGH. The interval 351–381 is disordered; sequence DHGHAEEHGHAGPAAGSEHGSHVAGASPGHG.

The protein belongs to the ATPase A chain family. As to quaternary structure, F-type ATPases have 2 components, CF(1) - the catalytic core - and CF(0) - the membrane proton channel. CF(1) has five subunits: alpha(3), beta(3), gamma(1), delta(1), epsilon(1). CF(0) has three main subunits: a(1), b(2) and c(9-12). The alpha and beta chains form an alternating ring which encloses part of the gamma chain. CF(1) is attached to CF(0) by a central stalk formed by the gamma and epsilon chains, while a peripheral stalk is formed by the delta and b chains.

The protein localises to the cell inner membrane. In terms of biological role, key component of the proton channel; it plays a direct role in the translocation of protons across the membrane. The sequence is that of ATP synthase subunit a from Anaeromyxobacter dehalogenans (strain 2CP-C).